The primary structure comprises 157 residues: UPF0758 protein VC_0510 (157 aa).

An MPN domain is found at 36–157 (ALTNPDATKE…CTSFAERGWL (122 aa)). Residues His-107, His-109, and Asp-120 each contribute to the Zn(2+) site. A JAMM motif motif is present at residues 107–120 (HNHPSGDSTPSQAD).

Belongs to the UPF0758 family.

This Vibrio cholerae serotype O1 (strain ATCC 39315 / El Tor Inaba N16961) protein is UPF0758 protein VC_0510.